A 493-amino-acid chain; its full sequence is Ectonucleoside triphosphate diphosphohydrolase 8 (493 aa).

At 1-7 (MEYKGKV) the chain is on the cytoplasmic side. The chain crosses the membrane as a helical span at residues 8-28 (VAGLLTATCVFSIIALILSAV). Residues 29 to 463 (DVKDVFLPPG…ALEHVKGHEP (435 aa)) are Extracellular-facing. N-linked (GlcNAc...) asparagine glycans are attached at residues Asn-65, Asn-79, and Asn-133. A disulfide bridge connects residues Cys-76 and Cys-100. Glu-166 (proton acceptor) is an active-site residue. 9 N-linked (GlcNAc...) asparagine glycosylation sites follow: Asn-223, Asn-234, Asn-267, Asn-324, Asn-330, Asn-361, Asn-372, Asn-382, and Asn-445. Cys-244 and Cys-291 are joined by a disulfide. An intrachain disulfide couples Cys-327 to Cys-333. Cys-379 and Cys-401 are oxidised to a cystine. A helical membrane pass occupies residues 464 to 486 (SLWAGAISFIVLAIVAGLVAILL). Residues 487-493 (QCFWKSK) lie on the Cytoplasmic side of the membrane.

This sequence belongs to the GDA1/CD39 NTPase family. Ca(2+) is required as a cofactor. Requires Mg(2+) as cofactor. N-glycosylated.

The protein localises to the cell membrane. The catalysed reaction is a ribonucleoside 5'-triphosphate + 2 H2O = a ribonucleoside 5'-phosphate + 2 phosphate + 2 H(+). Functionally, canalicular ectonucleoside NTPDase responsible for the main hepatic NTPDase activity. Ectonucleoside ATPases catalyze the hydrolysis of gamma- and beta-phosphate residues of nucleotides, playing a central role in concentration of extracellular nucleotides. This is Ectonucleoside triphosphate diphosphohydrolase 8 (ENTPD8) from Gallus gallus (Chicken).